The primary structure comprises 209 residues: Rac-like GTP-binding protein ARAC7 (209 aa).

Gly-13–Thr-20 provides a ligand contact to GTP. The Effector region signature appears at Tyr-35–Phe-43. GTP contacts are provided by residues Asp-60–Gln-64 and Thr-118–Asp-121. S-palmitoyl cysteine attachment occurs at residues Cys-196, Cys-203, and Cys-206.

The protein belongs to the small GTPase superfamily. Rho family. In terms of processing, although this sequence has a C-terminal -CXXX, it is palmitoylated at Cys-206, rather than prenylated.

It is found in the membrane. In terms of biological role, acts as a negative regulator of abscisic acid (ABA) responses. This Arabidopsis thaliana (Mouse-ear cress) protein is Rac-like GTP-binding protein ARAC7 (ARAC7).